We begin with the raw amino-acid sequence, 542 residues long: Probable quinate permease (542 aa).

Residues 1–22 (MSILALVEDRPTPKEVYNWKIY) are Cytoplasmic-facing. Residues 23–43 (LLAAVASFTSCMIGYDSAFIG) traverse the membrane as a helical segment. Residues 44 to 74 (TTLALSSFREEFGFSTMSKTAVNLVSANIVS) lie on the Extracellular side of the membrane. A helical membrane pass occupies residues 75 to 95 (CYQAGAFFGAFFAYPIGHFWG). The Cytoplasmic portion of the chain corresponds to 96 to 97 (RK). The chain crosses the membrane as a helical span at residues 98-118 (WGLLFAGTIFTLGAGLMLGAN). The Extracellular segment spans residues 119–130 (GDRGLGLLYGGR). A helical transmembrane segment spans residues 131–151 (VLAGLGVGAGSNITPIYISEM). The Cytoplasmic segment spans residues 152–159 (APPSIRGR). The helical transmembrane segment at 160–180 (LVGVYELGWQIGGLVGFWINY) threads the bilayer. The Extracellular portion of the chain corresponds to 181 to 193 (GVSETLAPSHKQW). Residues 194–214 (IIPFAVQLIPSGLLLIGAVFL) traverse the membrane as a helical segment. Over 215–285 (KESPRWLFSR…AGTNKKVMYR (71 aa)) the chain is Cytoplasmic. The helical transmembrane segment at 286 to 306 (LFLGSMLFFWQNGSGINAINY) threads the bilayer. Over 307–325 (YSPTVFKSIGLHGANTSMF) the chain is Extracellular. Residues 326–346 (STGIFGVVKTVVTFVWLLYLI) traverse the membrane as a helical segment. The Cytoplasmic portion of the chain corresponds to 347–352 (DRVGRR). A helical transmembrane segment spans residues 353–373 (LLLLIGAAGAAVCLLIVGAYI). Over 374–387 (KIADPASNPTQEMT) the chain is Extracellular. Residues 388–408 (GGGIAAMFFFYLYTVFYTPSW) traverse the membrane as a helical segment. The Cytoplasmic portion of the chain corresponds to 409 to 456 (NGTPWVMNSEMFEPNMRSLAQACAAASNWLWNFLISRFTPQMFAKMEY). Residues 457 to 477 (GVWFFFASLMLLSIVFVFFLV) form a helical membrane-spanning segment. Residues 478–542 (PETKGIPLES…EHVSEDLPKV (65 aa)) are Extracellular-facing. The tract at residues 523 to 542 (GYSKTGEQQVEHVSEDLPKV) is disordered. The segment covering 531–542 (QVEHVSEDLPKV) has biased composition (basic and acidic residues).

The protein belongs to the major facilitator superfamily. Sugar transporter (TC 2.A.1.1) family. As to quaternary structure, interacts with creB. In terms of processing, ubiquitinated. Deubiquitinated by creB, probably to control its activity or amount.

The protein localises to the cell membrane. Its function is as follows. Integral membrane transporter that imports quinic acid to be catabolized as a carbon source. In Aspergillus fumigatus (strain ATCC MYA-4609 / CBS 101355 / FGSC A1100 / Af293) (Neosartorya fumigata), this protein is Probable quinate permease (qutD).